A 69-amino-acid polypeptide reads, in one-letter code: uncharacterized protein (69 aa).

This is an uncharacterized protein from Saccharolobus islandicus (Sulfolobus islandicus).